We begin with the raw amino-acid sequence, 739 residues long: Polyribonucleotide nucleotidyltransferase (739 aa).

Mg(2+) contacts are provided by D514 and D520. One can recognise a KH domain in the interval 580–639; the sequence is PRIITVKIPVDKIGEVIGPKGKMINQIQEDTGADITIEDDGTIYIGAAQGSQAEAARATI. The region spanning 651-723 is the S1 motif domain; that stretch reads GERYLGTVVK…SRGKLSLIPV (73 aa).

It belongs to the polyribonucleotide nucleotidyltransferase family. Mg(2+) is required as a cofactor.

It is found in the cytoplasm. The catalysed reaction is RNA(n+1) + phosphate = RNA(n) + a ribonucleoside 5'-diphosphate. Involved in mRNA degradation. Catalyzes the phosphorolysis of single-stranded polyribonucleotides processively in the 3'- to 5'-direction. The protein is Polyribonucleotide nucleotidyltransferase of Streptomyces coelicolor (strain ATCC BAA-471 / A3(2) / M145).